Here is a 549-residue protein sequence, read N- to C-terminus: Tight junction-associated protein 1 (549 aa).

The interval 1-34 (MSSAAPAKKPYRKAPPEHRELRLEIPVSRLEQEE) is disordered. The span at 14–23 (APPEHRELRL) shows a compositional bias: basic and acidic residues. Positions 42 to 171 (MKLLQQENEE…EELNERYRLD (130 aa)) form a coiled coil. 2 disordered regions span residues 207-226 (RSGQ…LSPG) and 266-322 (VDMS…PLYP). S295 is subject to Phosphoserine. The segment covering 311–320 (YPTPSPPHPL) has biased composition (pro residues). T313 is modified (phosphothreonine). Phosphoserine occurs at positions 315 and 340. Disordered regions lie at residues 359–404 (EDGS…SEED), 410–429 (QRAF…RTAF), and 434–549 (LPEL…TVLS). Residues 369-383 (SVPSSPASAQGSPHH) are compositionally biased toward polar residues. Positions 389-400 (PSALSAPASSAS) are enriched in low complexity. Phosphothreonine is present on T417. S483 carries the post-translational modification Phosphoserine. The span at 485–498 (EEERQSLLPDKEGT) shows a compositional bias: basic and acidic residues. Residues 522 to 534 (RSPKRMGVHHLHR) show a composition bias toward basic residues. At S537 the chain carries Phosphoserine. The segment covering 538-549 (LTQAQEQGTVLS) has biased composition (polar residues).

As to quaternary structure, interacts with DLG1. Interacts with ARF6 (GTP-bound form). As to expression, widely expressed including in adult thymus, heart, lung, liver, small intestine, kidney, spleen, testis and skeletal muscle and in embryonic brain but not detected in adult brain (at protein level).

Its subcellular location is the golgi apparatus. It is found in the trans-Golgi network. It localises to the cell junction. The protein localises to the tight junction. The protein resides in the cell membrane. Functionally, plays a role in regulating the structure of the Golgi apparatus. This chain is Tight junction-associated protein 1, found in Mus musculus (Mouse).